The primary structure comprises 497 residues: Ammonium transporter Rh type C (497 aa).

At 1 to 9 the chain is on the cytoplasmic side; it reads MAWNTNLRG. A helical transmembrane segment spans residues 10-30; the sequence is RLPITCLILQVTMVVLFGVFV. Residues 31-61 lie on the Extracellular side of the membrane; that stretch reads RYDIQADAHWWLEKKRKNISSDVENEFYYRY. Asn-48 carries N-linked (GlcNAc...) asparagine glycosylation. The helical transmembrane segment at 62-82 threads the bilayer; sequence PSFEDVHAMVFVGFGFLMTYL. Over 83 to 93 the chain is Cytoplasmic; it reads QRYGFSAVGFN. Residues 94–114 traverse the membrane as a helical segment; the sequence is FLLAAFGIQWALLMQGWFHFF. The Extracellular segment spans residues 115-125; it reads EEGHILLSVEN. The chain crosses the membrane as a helical span at residues 126 to 145; it reads LIQADFCVASTCVAFGAVLG. The Cytoplasmic segment spans residues 146 to 151; sequence KISPMQ. Residues 152–174 traverse the membrane as a helical segment; it reads LLIMTFFQVTLFTVNEFILLNLI. At 175-179 the chain is on the extracellular side; sequence EAKDA. Residues 180 to 200 form a helical membrane-spanning segment; sequence GGSMTIHTFGAYFGLTVTWIL. Over 201 to 219 the chain is Cytoplasmic; it reads YRKNLEQSKQRQSSVYHSD. The helical transmembrane segment at 220 to 240 threads the bilayer; that stretch reads LFAMIGTLFLWIYWPSFNSAS. The Extracellular portion of the chain corresponds to 241 to 251; sequence SFHGDTQHRAA. A helical membrane pass occupies residues 252 to 272; that stretch reads LNTYLSLAASVLTTVAVSSVI. Residues 273 to 282 lie on the Cytoplasmic side of the membrane; it reads HKKGKLDMVH. The helical transmembrane segment at 283 to 303 threads the bilayer; the sequence is IQNATLAGGVGVGTAAEMMLT. Residue Pro-304 is a topological domain, extracellular. A helical transmembrane segment spans residues 305-325; sequence YGALIVGFFCGILSTLGFAYL. Residues 326 to 340 lie on the Cytoplasmic side of the membrane; it reads SPFLESRLRIQDTCG. A helical membrane pass occupies residues 341-361; the sequence is IHNLHGIPGIIGGIVGAVTAA. The Extracellular portion of the chain corresponds to 362 to 395; it reads YSSPDVYGEPGIVHSFGFGGYKADWTKRMQGRSQ. The helical transmembrane segment at 396–416 threads the bilayer; it reads IFGLLLSLAMALVGGIIVGFI. The Cytoplasmic segment spans residues 417–497; that stretch reads LKLPFWGQAS…ATVTSSSLVH (81 aa).

The protein belongs to the ammonium transporter (TC 2.A.49) family. Rh subfamily. As to quaternary structure, homotrimer. In terms of processing, N-glycosylated. In terms of tissue distribution, expressed by connecting tubule cells and intercalated cells of the collecting duct in kidney (at protein level).

It is found in the cell membrane. The protein resides in the apical cell membrane. The catalysed reaction is NH4(+)(in) = NH4(+)(out). The enzyme catalyses methylamine(out) = methylamine(in). It catalyses the reaction CO2(out) = CO2(in). Its function is as follows. Ammonium transporter involved in the maintenance of acid-base homeostasis. Transports ammonium and its related derivative methylammonium across the plasma membrane of epithelial cells likely contributing to renal transepithelial ammonia transport and ammonia metabolism. Postulated to primarily mediate an electroneutral bidirectional transport of NH3 ammonia species according to a mechanism that implies interaction of an NH4(+) ion with acidic residues of the pore entry followed by dissociation of NH4(+) into NH3 and H(+). As a result NH3 transits through the central pore and is protonated on the extracellular side reforming NH4(+). May act as a CO2 channel providing for renal acid secretion. In Rattus norvegicus (Rat), this protein is Ammonium transporter Rh type C (Rhcg).